Consider the following 72-residue polypeptide: MKLTCVLIVAVLFLTACQLTTAASYARSERQHPDLGSSDQNSKLTKRCLASGETCWRDTSCCSFSCTNNVCF.

The signal sequence occupies residues 1–22 (MKLTCVLIVAVLFLTACQLTTA). Positions 23–45 (ASYARSERQHPDLGSSDQNSKLT) are excised as a propeptide. 3 disulfides stabilise this stretch: C48–C62, C55–C66, and C61–C71.

This sequence belongs to the conotoxin O1 superfamily. In terms of tissue distribution, expressed by the venom duct.

It is found in the secreted. This is Conotoxin VnMKLT2-021 from Conus ventricosus (Mediterranean cone).